A 258-amino-acid polypeptide reads, in one-letter code: Caffeoyl-CoA O-methyltransferase 1 (258 aa).

Residues 1–16 show a composition bias toward low complexity; it reads MATTATEAAPAQEQQA. Positions 1–31 are disordered; sequence MATTATEAAPAQEQQANGNGEQKTRHSEVGH. A compositionally biased stretch (basic and acidic residues) spans 22-31; that stretch reads QKTRHSEVGH. Lysine 32 lines the substrate pocket. Residues threonine 74, glutamate 96, 98 to 99, serine 104, aspartate 122, and alanine 151 contribute to the S-adenosyl-L-methionine site; that span reads GV. Substrate is bound at residue aspartate 174. Position 174 (aspartate 174) interacts with a divalent metal cation. Aspartate 176 is a binding site for S-adenosyl-L-methionine. Aspartate 200 and asparagine 201 together coordinate a divalent metal cation. Asparagine 205 serves as a coordination point for substrate.

Belongs to the class I-like SAM-binding methyltransferase superfamily. Cation-dependent O-methyltransferase family. CCoAMT subfamily. It depends on a divalent metal cation as a cofactor.

It catalyses the reaction (E)-caffeoyl-CoA + S-adenosyl-L-methionine = (E)-feruloyl-CoA + S-adenosyl-L-homocysteine + H(+). It functions in the pathway aromatic compound metabolism; phenylpropanoid biosynthesis. Methylates caffeoyl-CoA to feruloyl-CoA and 5-hydroxyferuloyl-CoA to sinapoyl-CoA. Plays a role in the synthesis of feruloylated polysaccharides. Involved in the reinforcement of the plant cell wall. Also involved in the responding to wounding or pathogen challenge by the increased formation of cell wall-bound ferulic acid polymers. The protein is Caffeoyl-CoA O-methyltransferase 1 (CCOAOMT1) of Zea mays (Maize).